A 175-amino-acid chain; its full sequence is MNGIPTPTVDIQWASDAPDAPDETHLCEWVRHAAIAAGGVVGDITLRIVDEEEIRTLNRDYRDKDAPTNVLSFPFEMPEGLPEGAMDPLVGDIIICAAVVRREANEQHKPLVAHWAHMVTHGVLHLLGYDHIDDDDAIVMETLEIRALGELGFPDPYSPAQQESQAQPENTELNP.

Positions 121, 125, and 131 each coordinate Zn(2+). The tract at residues 154–175 (PDPYSPAQQESQAQPENTELNP) is disordered. Over residues 159-175 (PAQQESQAQPENTELNP) the composition is skewed to polar residues.

It belongs to the endoribonuclease YbeY family. The cofactor is Zn(2+).

Its subcellular location is the cytoplasm. Single strand-specific metallo-endoribonuclease involved in late-stage 70S ribosome quality control and in maturation of the 3' terminus of the 16S rRNA. This chain is Endoribonuclease YbeY, found in Alcanivorax borkumensis (strain ATCC 700651 / DSM 11573 / NCIMB 13689 / SK2).